A 398-amino-acid polypeptide reads, in one-letter code: O-methyltransferase penC (398 aa).

Residue Asp-263 participates in S-adenosyl-L-methionine binding. His-305 serves as the catalytic Proton acceptor.

This sequence belongs to the class I-like SAM-binding methyltransferase superfamily. Cation-independent O-methyltransferase family.

Its pathway is secondary metabolite biosynthesis. The protein operates within alkaloid biosynthesis. It participates in mycotoxin biosynthesis. Functionally, O-methyltransferase; part of the gene cluster that mediates the biosynthesis of penigequinolones, potent insecticidal alkaloids that contain a highly modified 10-carbon prenyl group. The first stage is catalyzed by the nonribosomal peptide synthetase penN that condenses anthranilic acid and O-methyl-L-tyrosine to produce 4'-methoxycyclopeptin. 4'-methoxycyclopeptin is then converted to 4'-methoxydehydrocyclopeptin by the ketoglutarate-dependent dioxygenase penM through dehydrogenation to form a double bond between C-alpha and C-beta of the O-methyltyrosine side chain. PenM also converts its first product methoxydehydrocyclopeptin to 4'-methoxycyclopenin. The following conversion of 4'methoxycyclopenin into 4'-methoxyviridicatin is catalyzed by the cyclopenase penL. 4'-methoxyviridicatin is the precursor of quinolone natural products, and is further converted to quinolinone B. The prenyltransferase penI then catalyzes the canonical Friedel-Crafts alkylation of quinolinone B with dimethylallyl cation to yield dimethylallyl quinolone, which is subjected to FAD-dependent dehydrogenation by the FAD-linked oxidoreductase penH to yield conjugated aryl diene. The delta(3') double bond then serves as the site of the second alkylation with DMAPP catalyzed by the prenyltransferase penG to yield a carbenium ion intermediate, which can be attacked by H(2)O to yield a styrenyl quinolone containing a C3'-hydroxyprenyl chain, or undergo cyclization to yield yaequinolones J1 and J2. The conversion of the styrenyl quinolone into the tetrahydrofuran-containing yaequinolone C is performed by the FAD-dependent monooxygenase penE and involves epoxidation of the terminal C7'-C8' olefin, followed by epoxide ring opening initiated by the C3' hydroxyl group. The predicted cysteine hydrolase penJ acts as an epoxide hydrolase that enhances the rate of the 5-exo-tet cyclization step, increasing the yield of yaequinolone C. PenF catalyzes the cationic rearrangement of the epoxide formed by penE (before ring opening to produce yaequinolone C) into yaequinolone D. Finally, the short-chain dehydrogenase/reductase (SDR)-like reductase penD, catalyzes both the dehydration of yaequinolone D and the reduction of the resulting oxonium to yield penigequinolone. In Penicillium thymicola, this protein is O-methyltransferase penC.